The sequence spans 361 residues: U7 snRNA-associated Sm-like protein LSm11 (361 aa).

The disordered stretch occupies residues 1–26 (MEEREWGARSARAGSPASPPSPRLDV). Serine 15 and serine 21 each carry phosphoserine. Omega-N-methylarginine is present on arginine 41. Residues 67–142 (RTGRGRARGT…QGPGRSKKAP (76 aa)) are disordered. Positions 76–96 (TGEPASAGTSTGTSTGAGSSS) are enriched in low complexity. Lysine 121 participates in a covalent cross-link: Glycyl lysine isopeptide (Lys-Gly) (interchain with G-Cter in SUMO2). Serine 155 bears the Phosphoserine mark. The 76-residue stretch at 155-230 (SPLGELHRCI…LTLTRLFDRL (76 aa)) folds into the Sm domain. The SM 1 stretch occupies residues 172-205 (VHIRTFKGLRGVCTGFLVAFDKFWNMALTDVDET). Residues 268 to 335 (RGDTDRSSHR…RKKKRKPKVD (68 aa)) form a disordered region. Phosphoserine is present on serine 281. Residues 307 to 323 (GSSVGGTFSRATTLSRG) are compositionally biased toward polar residues. Residues 344-357 (INQIFIRGENVLLV) form an SM 2 region.

Belongs to the snRNP Sm proteins family. In terms of assembly, component of the heptameric ring U7 snRNP complex, or U7 Sm protein core complex, at least composed of LSM10, LSM11, SNRPB, SNRPD3, SNRPE, SNRPF, SNRPG and U7 snRNA. Formation of the U7 snRNP is an ATP-dependent process mediated by a specialized SMN complex containing at least the Sm protein core complex and additionally, the U7-specific LSM10 and LSM11 proteins. Identified in a histone pre-mRNA complex, at least composed of ERI1, LSM11, SLBP, SNRPB, SYNCRIP and YBX1. Interacts (via the Sm domains) with CLNS1A. Interacts with PRMT5, SMN, ZNF473 and WDR77. In terms of processing, not methylated.

The protein resides in the nucleus. In terms of biological role, component of the U7 snRNP complex that is involved in the histone 3'-end pre-mRNA processing. Increases U7 snRNA levels but not histone 3'-end pre-mRNA processing activity, when overexpressed. Required for cell cycle progression from G1 to S phases. Binds specifically to the Sm-binding site of U7 snRNA. This chain is U7 snRNA-associated Sm-like protein LSm11, found in Mus musculus (Mouse).